We begin with the raw amino-acid sequence, 105 residues long: UPF0473 protein SAG2089 (105 aa).

The protein belongs to the UPF0473 family.

The protein is UPF0473 protein SAG2089 of Streptococcus agalactiae serotype V (strain ATCC BAA-611 / 2603 V/R).